The following is a 570-amino-acid chain: Sulfite reductase [NADPH] hemoprotein beta-component (570 aa).

[4Fe-4S] cluster is bound by residues C434, C440, C479, and C483. C483 lines the siroheme pocket.

Belongs to the nitrite and sulfite reductase 4Fe-4S domain family. As to quaternary structure, alpha(8)-beta(8). The alpha component is a flavoprotein, the beta component is a hemoprotein. Siroheme serves as cofactor. Requires [4Fe-4S] cluster as cofactor.

The catalysed reaction is hydrogen sulfide + 3 NADP(+) + 3 H2O = sulfite + 3 NADPH + 4 H(+). It participates in sulfur metabolism; hydrogen sulfide biosynthesis; hydrogen sulfide from sulfite (NADPH route): step 1/1. Functionally, component of the sulfite reductase complex that catalyzes the 6-electron reduction of sulfite to sulfide. This is one of several activities required for the biosynthesis of L-cysteine from sulfate. The chain is Sulfite reductase [NADPH] hemoprotein beta-component (cysI) from Salmonella typhimurium (strain LT2 / SGSC1412 / ATCC 700720).